The following is a 633-amino-acid chain: Chaperone protein dnaK2 (633 aa).

Position 197 is a phosphothreonine; by autocatalysis (T197). The span at A513–Q532 shows a compositional bias: basic and acidic residues. Disordered stretches follow at residues A513 to D534 and Q598 to K633. Residues P606–D619 show a composition bias toward low complexity. Over residues G620–K633 the composition is skewed to acidic residues.

It belongs to the heat shock protein 70 family.

Its function is as follows. Acts as a chaperone. In Nostoc sp. (strain PCC 7120 / SAG 25.82 / UTEX 2576), this protein is Chaperone protein dnaK2 (dnaK2).